Here is a 385-residue protein sequence, read N- to C-terminus: Probable endopeptidase MT2245 (385 aa).

Residues 235–257 (AALPPGAPPGDGPAPGVAPPPGG) are compositionally biased toward pro residues. Positions 235-268 (AALPPGAPPGDGPAPGVAPPPGGMPGLPFVQPDG) are disordered. The region spanning 270 to 385 (GGDRTAVVQA…SGPIYDARRY (116 aa)) is the NlpC/P60 domain. The Nucleophile role is filled by cysteine 300. Histidine 348 serves as the catalytic Proton acceptor. The active site involves histidine 360.

The protein belongs to the peptidase C40 family.

The protein is Probable endopeptidase MT2245 of Mycobacterium tuberculosis (strain CDC 1551 / Oshkosh).